The sequence spans 123 residues: Ribonuclease P protein component (123 aa).

It belongs to the RnpA family. In terms of assembly, consists of a catalytic RNA component (M1 or rnpB) and a protein subunit.

The enzyme catalyses Endonucleolytic cleavage of RNA, removing 5'-extranucleotides from tRNA precursor.. In terms of biological role, RNaseP catalyzes the removal of the 5'-leader sequence from pre-tRNA to produce the mature 5'-terminus. It can also cleave other RNA substrates such as 4.5S RNA. The protein component plays an auxiliary but essential role in vivo by binding to the 5'-leader sequence and broadening the substrate specificity of the ribozyme. This chain is Ribonuclease P protein component, found in Streptococcus pneumoniae (strain Hungary19A-6).